The sequence spans 191 residues: Early nodulin-like protein 8 (191 aa).

A signal peptide spans 1–22 (MGVMSLSKTMVVVVLQVMILLG). Residues 31 to 133 (TLYKVGDLDA…YQKLLVSVGT (103 aa)) form the Phytocyanin domain. Residues Cys-87 and Cys-121 are joined by a disulfide bond. N-linked (GlcNAc...) asparagine glycosylation is found at Asn-104 and Asn-108. The GPI-anchor amidated serine moiety is linked to residue Ser-165. Positions 166–191 (SASSSLISAFSTVAASLACAVVGAIM) are cleaved as a propeptide — removed in mature form.

Belongs to the early nodulin-like (ENODL) family. As to expression, mostly expressed in seedlings and roots, and, to a lower extent, in leaves, flowers, stems and seeds.

The protein resides in the cell membrane. Its function is as follows. May act as a carbohydrate transporter. The protein is Early nodulin-like protein 8 of Arabidopsis thaliana (Mouse-ear cress).